Here is a 361-residue protein sequence, read N- to C-terminus: Histidinol-phosphate aminotransferase (361 aa).

Lys218 carries the post-translational modification N6-(pyridoxal phosphate)lysine.

The protein belongs to the class-II pyridoxal-phosphate-dependent aminotransferase family. Histidinol-phosphate aminotransferase subfamily. As to quaternary structure, homodimer. Pyridoxal 5'-phosphate serves as cofactor.

It catalyses the reaction L-histidinol phosphate + 2-oxoglutarate = 3-(imidazol-4-yl)-2-oxopropyl phosphate + L-glutamate. Its pathway is amino-acid biosynthesis; L-histidine biosynthesis; L-histidine from 5-phospho-alpha-D-ribose 1-diphosphate: step 7/9. The chain is Histidinol-phosphate aminotransferase from Dinoroseobacter shibae (strain DSM 16493 / NCIMB 14021 / DFL 12).